Here is a 473-residue protein sequence, read N- to C-terminus: MARTPQEVLKWIQDENIKIIDLKFIDTPGIWQHCSFYYDQLDENSFTEGIPFDGSSIRGWKAINESDMCMVPDPNTATIDPFCKEPTLSMICSIKEPRTGEWYNRDPRTIAAKAVEYLRGTGIADTVYFGPEAEFFLFDDIRFGQTENSSYYFADSVEGRWNTGREEEGGNLGYKPGYKQGYFPVAPTDTAQDIRTEMLLTMAGLCVPIEKHHHEVASGGQNELGIKFDKLVNSADNLMIYKYVIKNVAKKYGKTVTFMPKPIFNDNGSGMHVHQSLWKDGQPLFAGDKYAGFSQMGLWYIGGILKHAPALLAFTNPTTNSYKRLVPGFEAPVNLAYSQGNRSASVRIPLSGGNPKAKRLEFRCPDATSNPYLAFAAMLCAGIDGIKNQIDPGEPLDVDIYDLSPEELAKIPSTPGSLEAALEALEKDHEFLTGTGVFSPDFVESWIEYKLDNEVNPMRLRPHPYEFSLYYDC.

The 86-residue stretch at 15–100 (ENIKIIDLKF…ICSIKEPRTG (86 aa)) folds into the GS beta-grasp domain. Residues 107 to 473 (PRTIAAKAVE…PYEFSLYYDC (367 aa)) enclose the GS catalytic domain. Residue Glu132 participates in Mn(2+) binding. Position 134 (Glu134) interacts with Mg(2+). Position 210 (Glu210) interacts with ATP. Positions 215 and 223 each coordinate Mg(2+). L-glutamate is bound by residues 267-268 (NG) and Gly268. His272 is a binding site for Mg(2+). Residues 274–276 (HQS) and Ser276 contribute to the ATP site. Residues Arg324, Glu330, and Arg342 each contribute to the L-glutamate site. ATP is bound by residues Arg342, Arg347, and Lys356. Glu361 contributes to the Mn(2+) binding site. Arg363 provides a ligand contact to L-glutamate. Tyr401 is subject to O-AMP-tyrosine.

Belongs to the glutamine synthetase family. Oligomer of 12 subunits arranged in the form of two hexagons. Requires Mg(2+) as cofactor.

It is found in the cytoplasm. The catalysed reaction is L-glutamate + NH4(+) + ATP = L-glutamine + ADP + phosphate + H(+). Its activity is regulated as follows. Inhibited by ADP (90%), AMP (80%), alanine (52%) and aspartate (41%). The activity of this enzyme could be controlled by adenylation under conditions of abundant glutamine. Its function is as follows. Involved in nitrogen metabolism via ammonium assimilation. Catalyzes the ATP-dependent biosynthesis of glutamine from glutamate and ammonia. The protein is Glutamine synthetase of Synechocystis sp. (strain ATCC 27184 / PCC 6803 / Kazusa).